A 664-amino-acid chain; its full sequence is Metal-nicotianamine transporter YSL2 (664 aa).

Transmembrane regions (helical) follow at residues 31-51 (ITVR…VICL), 55-75 (LTTG…FVFL), 103-123 (CAVA…LLGL), 147-167 (GVGW…VVLV), 209-229 (GFIK…FYSG), 268-288 (LVNL…WPLI), 314-334 (FICI…ILFF), 378-398 (IPLW…IIAI), 409-429 (FVLV…YGAG), 457-477 (VVAG…SADL), 496-516 (VAQA…FFLF), 549-569 (SALP…AVAA), 594-614 (FLVG…VYVW), and 629-649 (VASG…LLAL).

Belongs to the YSL (TC 2.A.67.2) family. As to expression, expressed in roots, leaves and weakly in shoots. Restricted to the veins, to the central cylinder of the young roots and to the pericycle and the endodermis cells facing the meta-xylem tubes in older roots. Expressed in the vasculature of sepals, petals, anthers, stigma and siliques, but not in developing seeds or in meristematic zones.

Its subcellular location is the cell membrane. May be involved in the lateral transport of nicotianamine-chelated metals in the vasculature. This is Metal-nicotianamine transporter YSL2 (YSL2) from Arabidopsis thaliana (Mouse-ear cress).